Here is a 98-residue protein sequence, read N- to C-terminus: Large ribosomal subunit protein uL23 (98 aa).

Belongs to the universal ribosomal protein uL23 family. As to quaternary structure, part of the 50S ribosomal subunit. Contacts protein L29, and trigger factor when it is bound to the ribosome.

Functionally, one of the early assembly proteins it binds 23S rRNA. One of the proteins that surrounds the polypeptide exit tunnel on the outside of the ribosome. Forms the main docking site for trigger factor binding to the ribosome. The chain is Large ribosomal subunit protein uL23 from Bordetella bronchiseptica (strain ATCC BAA-588 / NCTC 13252 / RB50) (Alcaligenes bronchisepticus).